Reading from the N-terminus, the 399-residue chain is Arylacetamide deacetylase (399 aa).

Over 1 to 4 (MRKK) the chain is Cytoplasmic. Residues 5 to 25 (YFGFLILGVLLAGYIYVPLPD) traverse the membrane as a helical; Signal-anchor for type II membrane protein segment. The Lumenal portion of the chain corresponds to 26–399 (NVEEPWKIML…QYINWLHENL (374 aa)). The Involved in the stabilization of the negatively charged intermediate by the formation of the oxyanion hole signature appears at 111-113 (HGG). A disulfide bond links cysteine 116 and cysteine 340. The active site involves serine 189. An N-linked (GlcNAc...) asparagine glycan is attached at asparagine 282. Catalysis depends on residues aspartate 343 and histidine 373.

Belongs to the 'GDXG' lipolytic enzyme family.

It is found in the endoplasmic reticulum membrane. The protein localises to the microsome membrane. It carries out the reaction a triacylglycerol + H2O = a diacylglycerol + a fatty acid + H(+). In terms of biological role, displays cellular triglyceride lipase activity in liver, increases the levels of intracellular fatty acids derived from the hydrolysis of newly formed triglyceride stores and plays a role in very low-density lipoprotein assembly. Displays serine esterase activity in liver. Deacetylates a variety of arylacetamide substrates, including xenobiotic compounds and procarcinogens, converting them to the primary arylamide compounds and increasing their toxicity. The polypeptide is Arylacetamide deacetylase (AADAC) (Bos taurus (Bovine)).